The chain runs to 181 residues: UPF0398 protein lin2003 (181 aa).

This sequence belongs to the UPF0398 family.

The protein is UPF0398 protein lin2003 of Listeria innocua serovar 6a (strain ATCC BAA-680 / CLIP 11262).